The following is a 272-amino-acid chain: Putative hydro-lyase RPD_1846 (272 aa).

The protein belongs to the D-glutamate cyclase family.

This chain is Putative hydro-lyase RPD_1846, found in Rhodopseudomonas palustris (strain BisB5).